The chain runs to 340 residues: Predicted GPI-anchored protein 46 (340 aa).

Residues 1–29 (MKILLIYSMTPKLVIWFTLFVLCLQMGDT) form the signal peptide. Positions 99–115 (SETTTTTTQESETSIAT) are enriched in low complexity. 2 disordered regions span residues 99-154 (SETT…SLSS) and 181-212 (MSSS…IKNY). Asn127 carries N-linked (GlcNAc...) asparagine glycosylation. The segment covering 182–191 (SSSSSSSSGS) has biased composition (low complexity). The segment covering 192 to 202 (LRDKSKLKQEN) has biased composition (basic and acidic residues). N-linked (GlcNAc...) asparagine glycosylation occurs at Asn270. The GPI-anchor amidated asparagine moiety is linked to residue Asn314. Positions 315–340 (SAPLLWIKISKPTVCLVIALTFLLLG) are cleaved as a propeptide — removed in mature form.

It localises to the cell membrane. Its subcellular location is the secreted. In Candida albicans (strain SC5314 / ATCC MYA-2876) (Yeast), this protein is Predicted GPI-anchored protein 46 (PGA46).